A 432-amino-acid polypeptide reads, in one-letter code: Cyclic GMP-AMP synthase (432 aa).

Residue 110–115 (QGSFQY) coordinates GTP. Positions 129 and 131 each coordinate Mg(2+). Arg180 lines the ATP pocket. Residue Asp191 participates in Mg(2+) binding. Residue Ser255 participates in ATP binding. 3 residues coordinate GTP: Lys283, Ser297, and Asp344. A Glycyl cysteine dithioester (Gly-Cys) (interchain with C-13 in Cap2) cross-link involves residue Gly432. Residue Gly432 forms a Glycyl cysteine dithioester (Gly-Cys) (interchain with C-493 in Cap2) linkage. Gly432 is covalently cross-linked (Glycyl cysteine dithioester (Gly-Cys) (interchain with C-513 in Cap2)). Gly432 is covalently cross-linked (Glycyl lysine isopeptide (Gly-Lys) (interchain with K-? in acceptor proteins)).

This sequence belongs to the CD-NTase family. A02 subfamily. A Cap2 dimer is bound on either side by a DncV monomer. It depends on Mg(2+) as a cofactor. Post-translationally, in bacteria expressing capV-dncV-cap2-cap3, this protein is conjugated to about 130 cellular proteins by Cap2, most of which are involved in metabolism; more conjugated protein is found in the absence of Cap3. Most conjugation occurs via an isopeptide bond with the epsilon-amine of Lys on the target protein, but Cys-conjugation also occurs, including to Cap2. Conjugation or deconjugation from cellular proteins does not change the DncV activity in vitro, but does so in vivo during infection. (Microbial infection) During phage T4 infection is conjugated to at least 2 T4 proteins (fibritin (wac) and dexA.2).

The catalysed reaction is GTP + ATP = 3',3'-cGAMP + 2 diphosphate. Primed for activation by Cap2 which conjugates it to cellular proteins. cGAMP production is induced in phage T4 infected cells in a manner that requires Cap2 and Cap3, as well as a C-terminal Ala or Gly residue in this protein. Its function is as follows. Cyclic nucleotide synthase (second messenger synthase) of a CBASS antivirus system. CBASS (cyclic oligonucleotide-based antiphage signaling system) provides immunity against bacteriophages. The CD-NTase protein (DncV, this protein) synthesizes cyclic nucleotides in response to infection; these serve as specific second messenger signals. The signals activate a diverse range of effectors, leading to bacterial cell death and thus abortive phage infection. A type II-A(GA) CBASS system. Catalyzes the synthesis of 3',3'-cyclic GMP-AMP (cGAMP) from GTP and ATP, a second messenger in cell signal transduction. Its product controls the activity of cGAMP-activated phospholipase CapV, a patatin-like lipase that is a direct cGAMP receptor encoded in the dncV operon. In terms of biological role, protects E.coli against phage infection. When capV and dncV are introduced in E.coli MG1655 there is 1000-fold protection against phage P1; protection against other phage (T2, T4, T5, T6 and lambda-vir) requires the 2 subsequent genes (cap2 and cap3). In another paper the capV-dncV-cap2-cap3 operon gives 10(4)-10(5)-fold protection against phages lambda, T2, T4 and T6, about 1000-fold protection against P1 and 10-fold protection against T5. The sequence is that of Cyclic GMP-AMP synthase from Escherichia coli (strain TW11681).